Consider the following 124-residue polypeptide: MKNVLIIFGKPYCSICENVSDAVEELKSEYDILHVDILSFFLKDGDSSMLGDVKRGTLIGNFAAHLSNYIVSIFKYNPQTKQMAFVDINKSLDFTKTDKSLVNLEILKSEIEKATYGVWPPVTE.

Cys13 and Cys16 form a disulfide bridge.

The protein belongs to the glutaredoxin family. In terms of assembly, homodimer.

It localises to the host cytoplasm. Glutaredoxin necessary for virion morphogenesis and virus replication. Functions as a thiol-disulfide transfer protein between membrane-associated OPG128 and substrates OPG095 or OPG053. The complete pathway for formation of disulfide bonds in intracellular virion membrane proteins sequentially involves oxidation of OPG072, OPG128 and OPG088. Exhibit thioltransferase and dehydroascorbate reductase activities in vitro. This is Glutaredoxin-2 (OPG088) from Oryctolagus cuniculus (Rabbit).